The primary structure comprises 433 residues: Tol-Pal system protein TolB (433 aa).

Positions 1–21 are cleaved as a signal peptide; that stretch reads MINLFRGLLVVLCFASAMVSA.

It belongs to the TolB family. The Tol-Pal system is composed of five core proteins: the inner membrane proteins TolA, TolQ and TolR, the periplasmic protein TolB and the outer membrane protein Pal. They form a network linking the inner and outer membranes and the peptidoglycan layer.

It localises to the periplasm. In terms of biological role, part of the Tol-Pal system, which plays a role in outer membrane invagination during cell division and is important for maintaining outer membrane integrity. The polypeptide is Tol-Pal system protein TolB (Pseudomonas syringae pv. syringae (strain B728a)).